Here is a 673-residue protein sequence, read N- to C-terminus: Armadillo repeat-containing protein 8 (673 aa).

ARM repeat units lie at residues 51 to 92 (NKQK…SLSM), 95 to 134 (ENNIKSLVDCHIIPALLQGLLCSDLIFIEACLRCLRTVFI), 138 to 176 (TPVQLLYTDPTVIPHLMSLLSRSQHTQEYITQIFAHCCK), 178 to 217 (PEHQTVLFNHGAIQNIAPLLISPSYKVRMQALKCFSVLAY), 225 to 265 (TLVN…YMCR), 269 to 309 (IRTE…YLME), 313 to 352 (ELQRIASVTDHLVSMLADYFKYPSSVSAITDIKRLDHDLK), 374 to 413 (DIRKKITETENMMDRIVSGLSESSIKVRLAAVRCLHSLSR), 416 to 455 (QQLRTSFHDHAVWKPLMKLLQNAPDEVLVMASSTLCNLLL), 458 to 497 (SPSKEPILESGVIELLCSLTQSDSSALRVNGIWALMNMAF), 501 to 540 (QKVKVEIVRALGTEQLFRLLSDPDTNVLMKTLGLLRNLLS), 543 to 585 (PHID…NIAD), 588 to 627 (TAKELIMTDDDMLQKIKYYMGHSNVKLQLAATFCISNLIW), and 634 to 673 (QERQDKLREMGFVDILHKLTQASDPDLCDRAKTAMQQYLA).

In terms of assembly, identified in the CTLH complex that contains at least MAEA, RMND5A (or alternatively its paralog RMND5B), GID8, WDR26, and RANBP9 and/or RANBP10; ARMC8 has an ancillary role in the complex.

Its subcellular location is the nucleus. The protein resides in the cytoplasm. Functionally, component of the CTLH E3 ubiquitin-protein ligase complex that mediates ubiquitination and subsequent proteasomal degradation of target proteins. This is Armadillo repeat-containing protein 8 (armc8) from Danio rerio (Zebrafish).